A 198-amino-acid polypeptide reads, in one-letter code: DnaJ homolog subfamily C member 5 (198 aa).

Phosphoserine is present on residues serine 8, serine 10, serine 12, and serine 15. One can recognise a J domain in the interval 13-82; the sequence is GESLYHVLGL…RNIYDKYGSL (70 aa). Tyrosine 17 is modified (phosphotyrosine). Lysine 56 carries the post-translational modification N6-acetyllysine. At serine 151 the chain carries Phosphoserine.

In terms of assembly, homodimer. Interacts with the chaperone complex consisting of HSC70 and SGTA. Interacts with ZDHHC13 (via ANK repeats). Interacts with ZDHHC17 (via ANK repeats). Interacts with SYT1, SYT5 and SYT7, and with SYT9, forming a complex with SNAP25. The interaction with SYT9 is stimulated tenfold in presence of calcium. Post-translationally, formation of the chaperone complex DNAJC5/HSC70 is not regulated by phosphorylation. Ser-10 phosphorylation induces an order-to-disorder transition triggering the interaction with Lys-58. This conformational switch modulates DNAJC5's cellular functions by reducing binding to syntaxin and synaptogamin without altering HSC70 interactions. In terms of processing, palmitoylated. Could be palmitoylated by DHHC3, DHHC7, DHHC15 and DHHC17. Palmitoylation occurs probably in the cysteine-rich domain and regulates DNAJC5 membrane attachment.

The protein resides in the cytoplasm. It is found in the cytosol. It localises to the membrane. The protein localises to the cytoplasmic vesicle. Its subcellular location is the secretory vesicle. The protein resides in the chromaffin granule membrane. It is found in the melanosome. It localises to the cell membrane. In terms of biological role, acts as a co-chaperone for the SNARE protein SNAP-25. Involved in the calcium-mediated control of a late stage of exocytosis. Acts as a general chaperone in regulated exocytosis. May have an important role in presynaptic function. May be involved in calcium-dependent neurotransmitter release at nerve endings. This chain is DnaJ homolog subfamily C member 5, found in Mus musculus (Mouse).